Consider the following 422-residue polypeptide: O-mycaminosyltylonolide 6-deoxyallosyltransferase (422 aa).

It belongs to the glycosyltransferase 28 family.

It carries out the reaction 5-O-beta-D-mycaminosyltylonolide + dTDP-6-deoxy-alpha-D-allose = demethyllactenocin + dTDP + H(+). In terms of biological role, involved in the biosynthesis of the macrolide antibiotic tylosin derived from the polyketide lactone tylactone. Catalyzes the transfer of 6-deoxy-alpha-D-allose from dTDP-6-deoxy-alpha-D-allose to O-mycaminosyltylonolide (OMT) to yield demethyllactenocin. The chain is O-mycaminosyltylonolide 6-deoxyallosyltransferase from Streptomyces fradiae (Streptomyces roseoflavus).